The chain runs to 243 residues: Asnovolin H synthase nvfL (243 aa).

7 consecutive transmembrane segments (helical) span residues 20–42, 51–71, 75–95, 112–132, 138–160, 169–189, and 205–225; these read ANTL…AYYS, ALIP…IHCP, FVRI…YAAI, LPFI…ALAA, IAFV…SQLL, SYVV…MVTI, and LLLW…FCFY.

The protein belongs to the paxB family.

Its subcellular location is the membrane. It catalyses the reaction (3R)-[(10S)-11-epoxyfarnesyl]-2,3,5-trimethyl-6-oxido-4-oxocyclohexa-1,5-diene-1-carboxylate + H(+) = asnovolin H. It functions in the pathway secondary metabolite biosynthesis; terpenoid biosynthesis. Functionally, terpene cyclase; part of the gene cluster that mediates the biosynthesis of novofumigatonin, a heavily oxygenated meroterpenoid containing a unique orthoester moiety. The first step of the pathway is the synthesis of 3,5-dimethylorsellinic acid (DMOA) by the polyketide synthase nvfA via condensation of one acetyl-CoA starter unit with 3 malonyl-CoA units and 2 methylations. DMOA is then converted to farnesyl-DMOA by the farnesyltransferase nvfB. Epoxydation by FAD-dependent monooxygenase nvfK, followed by a protonation-initiated cyclization catalyzed by the terpene cyclase nvfL leads to the production of asnavolin H. The short chain dehydrogenase nvfC then as a 3-OH dehydrogenase of asnovolin H to yield chemesin D. There are two branches to synthesize asnovolin A from chemesin D. In one branch, chemesin D undergoes Baeyer-Villiger oxidation by nvfH, methylation by nvfJ, and enoyl reduction by the nvfM D enoylreductase that reduces the double bond between C-5'and C-6', to form respectively asnovolin I, asnovolin K, and asnovolin A. In the other branch, the methylation precedes the Baeyer-Villiger oxidation and the enoyl reduction to yield asnovolin A via the asnovolin J intermediate. Asnovolin A is further converted to fumigatonoid A by the Fe(II)/2-oxoglutarate-dependent dioxygenase nvfI that catalyzes an endoperoxidation reaction. The alpha/beta hydrolase nvfD then acts as an epimerase that converts fumigatonoid A to its C-5' epimer, which then undergoes spontaneous or nvfD-catalyzed lactonization. The following step utilizes the ketoreductase nvfG to produce fumigatonoid B. The dioxygenase nvfE further converts fumigatonoid B into fumigatonoid C. Finally the Fe(II)/2-oxoglutarate-dependent dioxygenase nvfF catalyzes two rounds of oxidation to transform fumigatonoid C into the end product, novofumigatonin A. This chain is Asnovolin H synthase nvfL, found in Aspergillus novofumigatus (strain IBT 16806).